The chain runs to 251 residues: Triosephosphate isomerase (251 aa).

9–11 (NWK) is a substrate binding site. His-95 serves as the catalytic Electrophile. Glu-167 (proton acceptor) is an active-site residue. Residues Gly-173, Ser-213, and 234–235 (GG) contribute to the substrate site. Ser-213 bears the Phosphoserine mark.

This sequence belongs to the triosephosphate isomerase family. In terms of assembly, homodimer.

The protein resides in the cytoplasm. The catalysed reaction is D-glyceraldehyde 3-phosphate = dihydroxyacetone phosphate. Its pathway is carbohydrate biosynthesis; gluconeogenesis. The protein operates within carbohydrate degradation; glycolysis; D-glyceraldehyde 3-phosphate from glycerone phosphate: step 1/1. Involved in the gluconeogenesis. Catalyzes stereospecifically the conversion of dihydroxyacetone phosphate (DHAP) to D-glyceraldehyde-3-phosphate (G3P). This is Triosephosphate isomerase from Bacillus cereus (strain B4264).